Here is a 274-residue protein sequence, read N- to C-terminus: Orotidine 5'-phosphate decarboxylase (274 aa).

Substrate is bound by residues Asp-40, Lys-62–His-64, Asp-93–Thr-102, Tyr-227, and Arg-245. The Proton donor role is filled by Lys-95.

This sequence belongs to the OMP decarboxylase family.

The catalysed reaction is orotidine 5'-phosphate + H(+) = UMP + CO2. It participates in pyrimidine metabolism; UMP biosynthesis via de novo pathway; UMP from orotate: step 2/2. This is Orotidine 5'-phosphate decarboxylase (pyrG) from Emericella nidulans (strain FGSC A4 / ATCC 38163 / CBS 112.46 / NRRL 194 / M139) (Aspergillus nidulans).